The sequence spans 153 residues: FAD synthase (153 aa).

Residues 9–10 (TF), 14–17 (HPGH), and D92 each bind ATP.

It belongs to the archaeal FAD synthase family. In terms of assembly, homodimer. A divalent metal cation serves as cofactor.

It carries out the reaction FMN + ATP + H(+) = FAD + diphosphate. Its pathway is cofactor biosynthesis; FAD biosynthesis; FAD from FMN: step 1/1. Functionally, catalyzes the transfer of the AMP portion of ATP to flavin mononucleotide (FMN) to produce flavin adenine dinucleotide (FAD) coenzyme. The chain is FAD synthase from Halorubrum lacusprofundi (strain ATCC 49239 / DSM 5036 / JCM 8891 / ACAM 34).